A 313-amino-acid polypeptide reads, in one-letter code: Cytosolic Fe-S cluster assembly factor NUBP1 homolog (313 aa).

Positions 1–25 (MSDVPDDANAGCPGTGSAGAGKASG) are disordered. Residues Cys-12, Cys-26, Cys-29, and Cys-35 each contribute to the [4Fe-4S] cluster site. 66-73 (GKGGVGKS) provides a ligand contact to ATP. Residues Cys-240 and Cys-243 each coordinate [4Fe-4S] cluster.

The protein belongs to the Mrp/NBP35 ATP-binding proteins family. NUBP1/NBP35 subfamily. As to quaternary structure, heterotetramer of 2 NUBP1 and 2 NUBP2 chains. Requires [4Fe-4S] cluster as cofactor. As to expression, expressed in head amphid and labial ciliated sensory neurons and tail phasmid ciliated chemosensory neurons.

It is found in the cytoplasm. Its subcellular location is the cell projection. Component of the cytosolic iron-sulfur (Fe/S) protein assembly (CIA) machinery. Required for maturation of extramitochondrial Fe-S proteins. The NUBP1-NUBP2 heterotetramer forms a Fe-S scaffold complex, mediating the de novo assembly of an Fe-S cluster and its transfer to target apoproteins. Regulates cilium formation and structure. The chain is Cytosolic Fe-S cluster assembly factor NUBP1 homolog from Caenorhabditis elegans.